The sequence spans 548 residues: Chaperonin GroEL (548 aa).

Residues 30-33 (TLGP), Lys51, 87-91 (DGTTT), Gly415, 479-481 (NAA), and Asp495 contribute to the ATP site.

This sequence belongs to the chaperonin (HSP60) family. Forms a cylinder of 14 subunits composed of two heptameric rings stacked back-to-back. Interacts with the co-chaperonin GroES.

It localises to the cytoplasm. The enzyme catalyses ATP + H2O + a folded polypeptide = ADP + phosphate + an unfolded polypeptide.. In terms of biological role, together with its co-chaperonin GroES, plays an essential role in assisting protein folding. The GroEL-GroES system forms a nano-cage that allows encapsulation of the non-native substrate proteins and provides a physical environment optimized to promote and accelerate protein folding. The polypeptide is Chaperonin GroEL (Serratia proteamaculans (strain 568)).